Reading from the N-terminus, the 367-residue chain is UDP-N-acetylglucosamine--N-acetylmuramyl-(pentapeptide) pyrophosphoryl-undecaprenol N-acetylglucosamine transferase (367 aa).

UDP-N-acetyl-alpha-D-glucosamine is bound by residues 15 to 17, N127, R163, S191, I249, and Q294; that span reads TGG.

The protein belongs to the glycosyltransferase 28 family. MurG subfamily.

The protein localises to the cell inner membrane. The enzyme catalyses di-trans,octa-cis-undecaprenyl diphospho-N-acetyl-alpha-D-muramoyl-L-alanyl-D-glutamyl-meso-2,6-diaminopimeloyl-D-alanyl-D-alanine + UDP-N-acetyl-alpha-D-glucosamine = di-trans,octa-cis-undecaprenyl diphospho-[N-acetyl-alpha-D-glucosaminyl-(1-&gt;4)]-N-acetyl-alpha-D-muramoyl-L-alanyl-D-glutamyl-meso-2,6-diaminopimeloyl-D-alanyl-D-alanine + UDP + H(+). It participates in cell wall biogenesis; peptidoglycan biosynthesis. In terms of biological role, cell wall formation. Catalyzes the transfer of a GlcNAc subunit on undecaprenyl-pyrophosphoryl-MurNAc-pentapeptide (lipid intermediate I) to form undecaprenyl-pyrophosphoryl-MurNAc-(pentapeptide)GlcNAc (lipid intermediate II). The sequence is that of UDP-N-acetylglucosamine--N-acetylmuramyl-(pentapeptide) pyrophosphoryl-undecaprenol N-acetylglucosamine transferase from Burkholderia pseudomallei (strain 1106a).